An 881-amino-acid chain; its full sequence is DNA mismatch repair protein MutS (881 aa).

632–639 (GPNMGGKS) contacts ATP.

Belongs to the DNA mismatch repair MutS family.

In terms of biological role, this protein is involved in the repair of mismatches in DNA. It is possible that it carries out the mismatch recognition step. This protein has a weak ATPase activity. The protein is DNA mismatch repair protein MutS of Chelativorans sp. (strain BNC1).